Reading from the N-terminus, the 387-residue chain is Cobalt-precorrin-5B C(1)-methyltransferase (387 aa).

It belongs to the CbiD family.

The enzyme catalyses Co-precorrin-5B + S-adenosyl-L-methionine = Co-precorrin-6A + S-adenosyl-L-homocysteine. It participates in cofactor biosynthesis; adenosylcobalamin biosynthesis; cob(II)yrinate a,c-diamide from sirohydrochlorin (anaerobic route): step 6/10. In terms of biological role, catalyzes the methylation of C-1 in cobalt-precorrin-5B to form cobalt-precorrin-6A. In Desulfitobacterium hafniense (strain Y51), this protein is Cobalt-precorrin-5B C(1)-methyltransferase.